We begin with the raw amino-acid sequence, 607 residues long: NAD-dependent malic enzyme 2, mitochondrial (607 aa).

A mitochondrion-targeting transit peptide spans 1 to 32 (MMWKNIAGLSKAAAAARTHGSRRCFSTAIPGP). The Proton donor role is filled by Y136. R189 provides a ligand contact to NAD(+). K207 serves as the catalytic Proton acceptor. 3 residues coordinate a divalent metal cation: E278, D279, and D302. NAD(+) contacts are provided by D302 and N449.

The protein belongs to the malic enzymes family. Homodimer. Heterodimer of two related subunits in NAD-MEH complex. Interacts with NAD-ME1. Mg(2+) is required as a cofactor. Requires Mn(2+) as cofactor. As to expression, expressed in leaves, stems, flowers, and roots (at protein level). Present in pollen.

The protein resides in the mitochondrion. The catalysed reaction is (S)-malate + NAD(+) = pyruvate + CO2 + NADH. With respect to regulation, activated by 2-ketoglutarate, phosphoenolpyruvate (PEP), fructose 1,6-biphosphate (FBP) and coenzyme A (acetyl-CoA and CoA) as homodimer and by oxaloacetate (OAA), 2-ketoglutarate, succinate, fumarate and CoA as heterodimer NAD-MEH. Repressed by succinate and fumarate as homodimer, in the presence of NAD(+) and competitively toward the substrate L-malate. Its function is as follows. Involved in the regulation of sugars and amino acids metabolisms during the night period. The protein is NAD-dependent malic enzyme 2, mitochondrial (NAD-ME2) of Arabidopsis thaliana (Mouse-ear cress).